The chain runs to 295 residues: Putative 23S rRNA (guanine-N(1)-)-methyltransferase (295 aa).

Residues Cys11, Cys14, Cys31, and His35 each contribute to the Zn(2+) site. S-adenosyl-L-methionine is bound by residues Tyr74, 116–117, and His204; that span reads TG.

It belongs to the methyltransferase superfamily. RlmA family.

Its function is as follows. Confers strong resistance to mycinamicin (MM) and tylosin (TY). May function as methyltransferase. The protein is Putative 23S rRNA (guanine-N(1)-)-methyltransferase (myrA) of Micromonospora griseorubida.